The sequence spans 117 residues: Putative membrane protein insertion efficiency factor (117 aa).

Residues 87–117 (RKGGPSAAEPAIEGHIPSSPAAETPSHVQGA) form a disordered region.

This sequence belongs to the UPF0161 family.

It is found in the cell membrane. Could be involved in insertion of integral membrane proteins into the membrane. The chain is Putative membrane protein insertion efficiency factor from Streptomyces avermitilis (strain ATCC 31267 / DSM 46492 / JCM 5070 / NBRC 14893 / NCIMB 12804 / NRRL 8165 / MA-4680).